Reading from the N-terminus, the 72-residue chain is UPF0270 protein YheU (72 aa).

This sequence belongs to the UPF0270 family.

The protein is UPF0270 protein YheU of Shigella flexneri serotype 5b (strain 8401).